The primary structure comprises 148 residues: Meiosis inducing protein mei3 (148 aa).

Residues 1–20 (MSSQNTSNSRHPASSASALP) show a composition bias toward polar residues. The segment at 1 to 96 (MSSQNTSNSR…AQRIEHENKE (96 aa)) is disordered. Low complexity predominate over residues 21 to 46 (NRTNTARRSTSPRTSTGSSSTNTNTK). Over residues 75 to 86 (PMKRTKRVRRTP) the composition is skewed to basic residues.

In terms of biological role, acts as a critical meiotic inducer by binding non-covalently to protein kinase ran1/pat1 inhibiting its enzymatic activity. Inhibits ran1/pat1 by acting as a pseudosubstrate for ran1/pat1 instead of its natural substrate ste11. Inactivation of the ran1/pat1 protein kinase is both necessary and sufficient to divert a vegetative cell from mitotic division to meiotic differentiation. This is Meiosis inducing protein mei3 from Schizosaccharomyces pombe (strain 972 / ATCC 24843) (Fission yeast).